The chain runs to 209 residues: UPF0502 protein PSHAa0076 (209 aa).

Belongs to the UPF0502 family.

This is UPF0502 protein PSHAa0076 from Pseudoalteromonas translucida (strain TAC 125).